Reading from the N-terminus, the 334-residue chain is AT-hook motif nuclear-localized protein 2 (334 aa).

Low complexity predominate over residues 1–21 (METTGEVVKTTTGSDGGVTVV). 2 disordered regions span residues 1–103 (METT…PTTS) and 109–128 (STTS…PSSF). The segment covering 44–54 (SVAPPPPPPPQ) has biased composition (pro residues). The segment covering 71–80 (IKKRRGRPRK) has biased composition (basic residues). The Bipartite nuclear localization signal motif lies at 72-80 (KKRRGRPRK). Positions 72–84 (KKRRGRPRKYGHD) form a DNA-binding region, a.T hook. The segment covering 90–103 (LSPNPISSAAPTTS) has biased composition (polar residues). Positions 147–287 (AANFTPHIIT…PHNHNFMSSP (141 aa)) constitute a PPC domain. Polar residues predominate over residues 306–319 (SSLPISTWTPSFPS). Residues 306–334 (SSLPISTWTPSFPSDSRHKHSHDFNITLT) form a disordered region.

Its subcellular location is the nucleus. Transcription factor that specifically binds AT-rich DNA sequences related to the nuclear matrix attachment regions (MARs). The chain is AT-hook motif nuclear-localized protein 2 from Arabidopsis thaliana (Mouse-ear cress).